We begin with the raw amino-acid sequence, 345 residues long: N-acetyl-gamma-glutamyl-phosphate reductase (345 aa).

Cys153 is an active-site residue.

It belongs to the NAGSA dehydrogenase family. Type 1 subfamily.

The protein resides in the cytoplasm. It carries out the reaction N-acetyl-L-glutamate 5-semialdehyde + phosphate + NADP(+) = N-acetyl-L-glutamyl 5-phosphate + NADPH + H(+). It functions in the pathway amino-acid biosynthesis; L-arginine biosynthesis; N(2)-acetyl-L-ornithine from L-glutamate: step 3/4. In terms of biological role, catalyzes the NADPH-dependent reduction of N-acetyl-5-glutamyl phosphate to yield N-acetyl-L-glutamate 5-semialdehyde. The sequence is that of N-acetyl-gamma-glutamyl-phosphate reductase from Methylacidiphilum infernorum (isolate V4) (Methylokorus infernorum (strain V4)).